The primary structure comprises 1709 residues: Acrosomal protein KIAA1210 (1709 aa).

8 disordered regions span residues 207–226 (PVRE…GSKA), 239–275 (PERS…SKVP), 451–663 (PNLD…AEKT), 763–973 (PPRS…MAVE), 1211–1382 (LKRG…SVNA), 1408–1516 (TKKF…GRGH), 1539–1571 (ADKQ…QSDY), and 1589–1653 (FKAH…KSVG). Residues 257 to 272 (PQQRSHISRTLPKPRS) are compositionally biased toward basic residues. Basic and acidic residues predominate over residues 473 to 490 (EEEKSITKPKEINEKKLG). Polar residues-rich tracts occupy residues 494 to 505 (ADSSSQKQNNKT) and 514 to 527 (DQAP…SQGY). Over residues 595 to 608 (EQPTTSQPETTTPQ) the composition is skewed to low complexity. The span at 651–663 (PYHEDAASGAEKT) shows a compositional bias: basic and acidic residues. Residues 777-794 (EEVSSDSENIPEEGDGSE) are compositionally biased toward acidic residues. Polar residues-rich tracts occupy residues 886-941 (KNQQ…QSDS), 1288-1299 (FKEQLSPRQLSQ), 1332-1350 (HSSQ…SSKG), 1366-1376 (PSSSPFQQQVH), and 1457-1469 (DGNN…LSNQ). Residues 1502–1513 (SVPSGPISSSVG) are compositionally biased toward low complexity. The segment covering 1542–1552 (QQSRPKSESMA) has biased composition (basic and acidic residues).

Interacts with TOP2B.

The protein localises to the cytoplasmic vesicle. Its subcellular location is the secretory vesicle. The protein resides in the acrosome. The protein is Acrosomal protein KIAA1210 of Homo sapiens (Human).